Consider the following 211-residue polypeptide: Probable superoxide dismutase [Mn], mitochondrial (211 aa).

His-36, His-84, Asp-173, and His-177 together coordinate Mn(2+).

It belongs to the iron/manganese superoxide dismutase family. As to quaternary structure, homotetramer. It depends on Mn(2+) as a cofactor.

The protein resides in the mitochondrion matrix. The enzyme catalyses 2 superoxide + 2 H(+) = H2O2 + O2. Destroys superoxide anion radicals which are normally produced within the cells and which are toxic to biological systems. This chain is Probable superoxide dismutase [Mn], mitochondrial, found in Debaryomyces hansenii (strain ATCC 36239 / CBS 767 / BCRC 21394 / JCM 1990 / NBRC 0083 / IGC 2968) (Yeast).